The following is a 376-amino-acid chain: MTETPQRTRPLRVLAAMSGGVDSAVAAARAAEAGHDVTGVHLALSANPQSFRTGARGCCTIEDSRDARRAADVIGIPFYVWDLADRFREDVVEDFVAEYEAGRTPNPCLRCNEKIKFAALLDKALALGFDAVCTGHYAQVILREDGVRELHRASDMAKDQSYVLGVLDDRQLAHAMFPLGDTVTTKDEIRAEAERRGLAVAKKPDSHDICFIADGNTQGFLADRLGKAEGDIVDEAGNRLGTHEGAYGYTIGQRKGLRIGTPAPDGKPRYVLDISPVNNTVTVGPAEALDVDALRAIKPRWCGAAPTGPGTYTAQLRAHGGETEVRAELVDGTLEVTFSEPVRGVAPGQAIVLYDGTRVVGSATIASTTRATAGAA.

Residues 16–23 and L42 each bind ATP; that span reads AMSGGVDS. The active-site Nucleophile is the C111. Residues C111 and C210 are joined by a disulfide bond. G135 provides a ligand contact to ATP. The interval 158–160 is interaction with tRNA; the sequence is KDQ. C210 serves as the catalytic Cysteine persulfide intermediate.

Belongs to the MnmA/TRMU family.

The protein resides in the cytoplasm. It carries out the reaction S-sulfanyl-L-cysteinyl-[protein] + uridine(34) in tRNA + AH2 + ATP = 2-thiouridine(34) in tRNA + L-cysteinyl-[protein] + A + AMP + diphosphate + H(+). Catalyzes the 2-thiolation of uridine at the wobble position (U34) of tRNA, leading to the formation of s(2)U34. The protein is tRNA-specific 2-thiouridylase MnmA of Streptomyces coelicolor (strain ATCC BAA-471 / A3(2) / M145).